The chain runs to 143 residues: uncharacterized protein (143 aa).

Belongs to the OsmC/Ohr family.

This is an uncharacterized protein from Acinetobacter baylyi (strain ATCC 33305 / BD413 / ADP1).